The primary structure comprises 205 residues: Holliday junction branch migration complex subunit RuvA (205 aa).

The interval 1–68 (MIGYLEGTLL…QPKPVLIGFN (68 aa)) is domain I. The interval 69–146 (TEEEKDFFHL…RFADAGHSSA (78 aa)) is domain II. The segment at 147-151 (PDVPV) is flexible linker. The segment at 152–205 (TGSLADQTVEVLVGQLGYKPNEARLMVAGALKRNPDVSTPEALFDEIFKHGQAQ) is domain III.

Belongs to the RuvA family. In terms of assembly, homotetramer. Forms an RuvA(8)-RuvB(12)-Holliday junction (HJ) complex. HJ DNA is sandwiched between 2 RuvA tetramers; dsDNA enters through RuvA and exits via RuvB. An RuvB hexamer assembles on each DNA strand where it exits the tetramer. Each RuvB hexamer is contacted by two RuvA subunits (via domain III) on 2 adjacent RuvB subunits; this complex drives branch migration. In the full resolvosome a probable DNA-RuvA(4)-RuvB(12)-RuvC(2) complex forms which resolves the HJ.

It is found in the cytoplasm. Its function is as follows. The RuvA-RuvB-RuvC complex processes Holliday junction (HJ) DNA during genetic recombination and DNA repair, while the RuvA-RuvB complex plays an important role in the rescue of blocked DNA replication forks via replication fork reversal (RFR). RuvA specifically binds to HJ cruciform DNA, conferring on it an open structure. The RuvB hexamer acts as an ATP-dependent pump, pulling dsDNA into and through the RuvAB complex. HJ branch migration allows RuvC to scan DNA until it finds its consensus sequence, where it cleaves and resolves the cruciform DNA. This Desulfosudis oleivorans (strain DSM 6200 / JCM 39069 / Hxd3) (Desulfococcus oleovorans) protein is Holliday junction branch migration complex subunit RuvA.